We begin with the raw amino-acid sequence, 495 residues long: MGDEYMDDDEDYGFEYEDDSGSEPDVDMENQYYTAKGLRSDGKLDEAIKSFEKVLELEGEKGEWGFKALKQMIKITFGQNRLEKMLEYYRQLLTYIKSAVTKNYSEKSINAILDYISTSRQMDLLQHFYETTLDALKDAKNERLWFKTNTKLGKLFFDLHEFTKLEKIVKQLKVSCKNEQGEEDQRKGTQLLEIYALEIQMYTEQKNNKALKWVYELATQAIHTKSAIPHPLILGTIRECGGKMHLRDGRFLDAHTDFFEAFKNYDESGSPRRTTCLKYLVLANMLIKSDINPFDSQEAKPFKNEPEIVAMTQMVQAYQDNDIQAFEQIMAAHQDSIMADPFIREHTEELMNNIRTQVLLRLIRPYTNVRISYLSQKLKVSQKEVIHLLVDAILDDGLEAKINEESGMIEMPKNKKKMMVTSLVVPNAGDQGTTKSDSKPGTSSEPSTTTSVTSSILQGPPATSSCHQELSMDGLRVWAERIDSIQSNIGTRIKF.

Residues 1-26 (MGDEYMDDDEDYGFEYEDDSGSEPDV) form a disordered region. The PCI domain occupies 254–416 (AHTDFFEAFK…GMIEMPKNKK (163 aa)). The segment at 426 to 468 (PNAGDQGTTKSDSKPGTSSEPSTTTSVTSSILQGPPATSSCHQ) is disordered. Residues 430 to 441 (DQGTTKSDSKPG) show a composition bias toward polar residues. Residues 442 to 455 (TSSEPSTTTSVTSS) show a composition bias toward low complexity.

It belongs to the CSN2 family. Component of the CSN complex, probably composed of csn-1, csn-2, csn-3, csn-4, csn-5, csn-6 and csn-7. Within the complex it probably interacts directly with csn-1, csn-3 and csn-4.

It localises to the cytoplasm. Its subcellular location is the nucleus. Essential component of the COP9 signalosome complex (CSN), a complex involved in various cellular and developmental processes. The CSN complex is an essential regulator of the ubiquitin (Ubl) conjugation pathway by mediating the deneddylation of the cullin subunits of the SCF-type E3 ligase complexes, leading to decrease the Ubl ligase activity of SCF. The CSN complex plays an essential role in embryogenesis and oogenesis and is required to regulate microtubule stability in the early embryo. Mediates mei-3/katanin targeting for degradation at the meiosis to mitosis transition via deneddylation of cul-3. In Caenorhabditis elegans, this protein is COP9 signalosome complex subunit 2 (csn-2).